Here is a 142-residue protein sequence, read N- to C-terminus: 3-hydroxyacyl-[acyl-carrier-protein] dehydratase FabZ (142 aa).

The active site involves histidine 49.

This sequence belongs to the thioester dehydratase family. FabZ subfamily.

The protein resides in the cytoplasm. The catalysed reaction is a (3R)-hydroxyacyl-[ACP] = a (2E)-enoyl-[ACP] + H2O. Involved in unsaturated fatty acids biosynthesis. Catalyzes the dehydration of short chain beta-hydroxyacyl-ACPs and long chain saturated and unsaturated beta-hydroxyacyl-ACPs. The protein is 3-hydroxyacyl-[acyl-carrier-protein] dehydratase FabZ of Deinococcus geothermalis (strain DSM 11300 / CIP 105573 / AG-3a).